A 425-amino-acid chain; its full sequence is Threonylcarbamoyladenosine tRNA methylthiotransferase (425 aa).

The Radical SAM core domain occupies 60 to 295 (RKNELIEVLS…RSYTRYTDER (236 aa)). Cys74, Cys78, and Cys81 together coordinate [4Fe-4S] cluster. The TRAM domain occupies 293-355 (DERIGELHRV…KFSMISKPAS (63 aa)). The chain crosses the membrane as a helical span at residues 362-382 (PLSLMHLFPLAVFCLVLITLY).

This sequence belongs to the methylthiotransferase family. CDKAL1 subfamily. It depends on [4Fe-4S] cluster as a cofactor.

The protein localises to the membrane. It carries out the reaction N(6)-L-threonylcarbamoyladenosine(37) in tRNA + (sulfur carrier)-SH + AH2 + 2 S-adenosyl-L-methionine = 2-methylsulfanyl-N(6)-L-threonylcarbamoyladenosine(37) in tRNA + (sulfur carrier)-H + 5'-deoxyadenosine + L-methionine + A + S-adenosyl-L-homocysteine + 2 H(+). In terms of biological role, catalyzes the methylthiolation of N6-threonylcarbamoyladenosine (t(6)A), leading to the formation of 2-methylthio-N6-threonylcarbamoyladenosine (ms(2)t(6)A) at position 37 in tRNAs that read codons beginning with adenine. The sequence is that of Threonylcarbamoyladenosine tRNA methylthiotransferase from Caenorhabditis elegans.